A 152-amino-acid chain; its full sequence is MVLKAVCVLRGAGETTGTVYFEQEGNANAVGKGIILKGLTPGEHGFHVHGFGDNTNGCISAGPHFNPASKKHAGPKDEDRHVGDLGNVTADANGVAKIDITDKISLTGPYSIIGRTMVIHEKADDLGRGGNEESLKTGNAGSRLACGVIGTE.

Cys7 carries the S-palmitoyl cysteine lipid modification. 3 residues coordinate Cu cation: His47, His49, and His64. Cys58 and Cys146 form a disulfide bridge. 4 residues coordinate Zn(2+): His64, His72, His81, and Asp84. His120 is a Cu cation binding site.

Belongs to the Cu-Zn superoxide dismutase family. Homodimer. The cofactor is Cu cation. Zn(2+) is required as a cofactor.

It localises to the cytoplasm. The protein localises to the nucleus. It catalyses the reaction 2 superoxide + 2 H(+) = H2O2 + O2. Functionally, destroys radicals which are normally produced within the cells and which are toxic to biological systems. The protein is Superoxide dismutase [Cu-Zn] (sod1) of Xiphias gladius (Swordfish).